We begin with the raw amino-acid sequence, 565 residues long: Polyadenylate-binding protein 1-A (565 aa).

4 RRM domains span residues 10–88 (SSLY…WSQR), 98–175 (GNVF…PFKS), 188–265 (TNVF…RAQK), and 284–362 (VNLY…LAQR). Residues 435-466 (YARGQPRQNGPRQNGGQPRQNGPRPDVSGAQP) are disordered. Residues 440 to 454 (PRQNGPRQNGGQPRQ) are compositionally biased toward polar residues. Residues 489 to 565 (SALNLQSIIN…REALEVLGSN (77 aa)) form the PABC domain.

It belongs to the polyadenylate-binding protein type-1 family.

It localises to the cytoplasm. The protein localises to the nucleus. Binds the poly(A) tail of mRNA. Appears to be an important mediator of the multiple roles of the poly(A) tail in mRNA biogenesis, stability and translation. The protein is Polyadenylate-binding protein 1-A (pabpc1A) of Dictyostelium discoideum (Social amoeba).